A 180-amino-acid polypeptide reads, in one-letter code: Large ribosomal subunit protein uL5 (180 aa).

This sequence belongs to the universal ribosomal protein uL5 family. As to quaternary structure, part of the 50S ribosomal subunit; part of the 5S rRNA/L5/L18/L25 subcomplex. Contacts the 5S rRNA and the P site tRNA. Forms a bridge to the 30S subunit in the 70S ribosome.

Its function is as follows. This is one of the proteins that bind and probably mediate the attachment of the 5S RNA into the large ribosomal subunit, where it forms part of the central protuberance. In the 70S ribosome it contacts protein S13 of the 30S subunit (bridge B1b), connecting the 2 subunits; this bridge is implicated in subunit movement. Contacts the P site tRNA; the 5S rRNA and some of its associated proteins might help stabilize positioning of ribosome-bound tRNAs. The protein is Large ribosomal subunit protein uL5 of Chlamydia caviae (strain ATCC VR-813 / DSM 19441 / 03DC25 / GPIC) (Chlamydophila caviae).